Reading from the N-terminus, the 178-residue chain is Ribosome maturation factor RimP (178 aa).

This sequence belongs to the RimP family.

It localises to the cytoplasm. Required for maturation of 30S ribosomal subunits. The chain is Ribosome maturation factor RimP from Mycolicibacterium paratuberculosis (strain ATCC BAA-968 / K-10) (Mycobacterium paratuberculosis).